The primary structure comprises 288 residues: 2-hydroxy-6-oxononadienedioate/2-hydroxy-6-oxononatrienedioate hydrolase (288 aa).

Residues 38–274 enclose the AB hydrolase-1 domain; the sequence is ALVLLHGSGP…RCGHWAQWEH (237 aa). The active-site Proton acceptor is the His268.

The protein belongs to the AB hydrolase superfamily. MhpC family. As to quaternary structure, homodimer.

It catalyses the reaction (2Z,4E)-2-hydroxy-6-oxonona-2,4-dienedioate + H2O = (2Z)-2-hydroxypenta-2,4-dienoate + succinate + H(+). The enzyme catalyses (2Z,4E,7E)-2-hydroxy-6-oxonona-2,4,7-trienedioate + H2O = (2Z)-2-hydroxypenta-2,4-dienoate + fumarate + H(+). It functions in the pathway aromatic compound metabolism; 3-phenylpropanoate degradation. In terms of biological role, catalyzes the cleavage of the C5-C6 bond of 2-hydroxy-6-oxononadienedioate and 2-hydroxy-6-oxononatrienedioate, a dienol ring fission product of the bacterial meta-cleavage pathway for degradation of phenylpropionic acid. This is 2-hydroxy-6-oxononadienedioate/2-hydroxy-6-oxononatrienedioate hydrolase from Burkholderia vietnamiensis (strain G4 / LMG 22486) (Burkholderia cepacia (strain R1808)).